We begin with the raw amino-acid sequence, 391 residues long: D-gluconate/D-galactonate dehydratase (391 aa).

Residue Glu-198 participates in Mg(2+) binding. The active-site Proton donor is the His-200. Positions 224 and 250 each coordinate Mg(2+). His-300 serves as the catalytic Proton acceptor.

It belongs to the mandelate racemase/muconate lactonizing enzyme family. GaD subfamily. In terms of assembly, homooctamer. Mg(2+) is required as a cofactor.

It catalyses the reaction D-gluconate = 2-dehydro-3-deoxy-D-gluconate + H2O. The catalysed reaction is D-galactonate = 2-dehydro-3-deoxy-D-galactonate + H2O. The protein operates within carbohydrate acid metabolism; D-gluconate degradation. Functionally, involved in the degradation of glucose and galactose via the nonphosphorylative variant of Entner-Doudoroff pathway. Catalyzes the dehydration of gluconate to produce 2-keto-3-deoxygluconate (KDG). It is also able to catalyze the dehydration of galactonate to produce 2-keto-3-deoxygalactonate (KDGal). In Picrophilus torridus (strain ATCC 700027 / DSM 9790 / JCM 10055 / NBRC 100828 / KAW 2/3), this protein is D-gluconate/D-galactonate dehydratase.